Reading from the N-terminus, the 114-residue chain is Progonadoliberin-2 (114 aa).

The N-terminal stretch at Met-1–Ala-24 is a signal peptide. Gly-34 carries the glycine amide modification. A disordered region spans residues Gly-35–Ala-59.

This sequence belongs to the GnRH family.

It localises to the secreted. Its function is as follows. Stimulates the secretion of gonadotropins; it stimulates the secretion of both luteinizing and follicle-stimulating hormones. The polypeptide is Progonadoliberin-2 (GNRH2) (Macaca mulatta (Rhesus macaque)).